Consider the following 427-residue polypeptide: Enolase 2 (427 aa).

Gln163 contacts (2R)-2-phosphoglycerate. Catalysis depends on Glu205, which acts as the Proton donor. Mg(2+)-binding residues include Asp242, Glu285, and Asp312. (2R)-2-phosphoglycerate is bound by residues Lys337, Arg366, Ser367, and Lys388. Lys337 (proton acceptor) is an active-site residue.

The protein belongs to the enolase family. Component of the RNA degradosome, a multiprotein complex involved in RNA processing and mRNA degradation. It depends on Mg(2+) as a cofactor.

It localises to the cytoplasm. Its subcellular location is the secreted. The protein resides in the cell surface. The enzyme catalyses (2R)-2-phosphoglycerate = phosphoenolpyruvate + H2O. It functions in the pathway carbohydrate degradation; glycolysis; pyruvate from D-glyceraldehyde 3-phosphate: step 4/5. In terms of biological role, catalyzes the reversible conversion of 2-phosphoglycerate (2-PG) into phosphoenolpyruvate (PEP). It is essential for the degradation of carbohydrates via glycolysis. This Methylococcus capsulatus (strain ATCC 33009 / NCIMB 11132 / Bath) protein is Enolase 2.